Reading from the N-terminus, the 400-residue chain is Glutamyl-tRNA reductase (400 aa).

Substrate contacts are provided by residues 45–48 (TCNR), serine 103, 108–110 (EDQ), and glutamine 114. The active-site Nucleophile is the cysteine 46. 179-184 (GYGEIG) contributes to the NADP(+) binding site.

The protein belongs to the glutamyl-tRNA reductase family. In terms of assembly, homodimer.

The enzyme catalyses (S)-4-amino-5-oxopentanoate + tRNA(Glu) + NADP(+) = L-glutamyl-tRNA(Glu) + NADPH + H(+). The protein operates within porphyrin-containing compound metabolism; protoporphyrin-IX biosynthesis; 5-aminolevulinate from L-glutamyl-tRNA(Glu): step 1/2. In terms of biological role, catalyzes the NADPH-dependent reduction of glutamyl-tRNA(Glu) to glutamate 1-semialdehyde (GSA). This is Glutamyl-tRNA reductase from Clostridium perfringens (strain 13 / Type A).